Reading from the N-terminus, the 185-residue chain is uncharacterized protein (185 aa).

The G domain occupies 17-137 (GKSSIMNALF…QKPIIVVINK (121 aa)).

This is an uncharacterized protein from Methanocaldococcus jannaschii (strain ATCC 43067 / DSM 2661 / JAL-1 / JCM 10045 / NBRC 100440) (Methanococcus jannaschii).